The sequence spans 177 residues: Endoribonuclease YbeY (177 aa).

Positions 114, 118, and 124 each coordinate Zn(2+). The interval 154-177 is disordered; the sequence is SYPEAIPTNPAPRRQASSSAGHIE. A compositionally biased stretch (polar residues) spans 168–177; that stretch reads QASSSAGHIE.

Belongs to the endoribonuclease YbeY family. Requires Zn(2+) as cofactor.

It is found in the cytoplasm. Its function is as follows. Single strand-specific metallo-endoribonuclease involved in late-stage 70S ribosome quality control and in maturation of the 3' terminus of the 16S rRNA. This chain is Endoribonuclease YbeY, found in Cellvibrio japonicus (strain Ueda107) (Pseudomonas fluorescens subsp. cellulosa).